The following is a 178-amino-acid chain: Small ribosomal subunit protein uS7c (178 aa).

Residues 137 to 146 show a composition bias toward basic and acidic residues; that stretch reads QKKEEIEKSK. The tract at residues 137 to 178 is disordered; the sequence is QKKEEIEKSKSPVNNNKKFISKNKKSKNKKQKKRLKRKKNIY. Over residues 155 to 178 the composition is skewed to basic residues; that stretch reads FISKNKKSKNKKQKKRLKRKKNIY.

The protein belongs to the universal ribosomal protein uS7 family. In terms of assembly, part of the 30S ribosomal subunit.

The protein resides in the plastid. Functionally, one of the primary rRNA binding proteins, it binds directly to 16S rRNA where it nucleates assembly of the head domain of the 30S subunit. The polypeptide is Small ribosomal subunit protein uS7c (rps7) (Euglena longa (Euglenophycean alga)).